The chain runs to 305 residues: 2-oxoacid:ferredoxin oxidoreductase subunit beta (305 aa).

Residues Cys-12, Cys-15, and Cys-46 each contribute to the [4Fe-4S] cluster site. Thiamine diphosphate is bound by residues 44–47 (IGCS) and His-65. Asp-90 is a binding site for Mg(2+). 91 to 92 (GD) contributes to the thiamine diphosphate binding site. Mg(2+) contacts are provided by Asn-118 and Val-120. 122–123 (GL) contributes to the thiamine diphosphate binding site. [4Fe-4S] cluster is bound at residue Cys-197.

As to quaternary structure, heterodimer composed of an alpha and a beta subunit. Requires [4Fe-4S] cluster as cofactor. Thiamine diphosphate serves as cofactor. The cofactor is Mg(2+).

The catalysed reaction is a 2-oxocarboxylate + 2 oxidized [2Fe-2S]-[ferredoxin] + CoA = an acyl-CoA + 2 reduced [2Fe-2S]-[ferredoxin] + CO2 + H(+). Its function is as follows. Catalyzes the coenzyme A-dependent oxidative decarboxylation of different 2-oxoacids such as 2-oxoglutarate, pyruvate and 2-oxobutyrate to form their CoA derivatives. In Saccharolobus solfataricus (Sulfolobus solfataricus), this protein is 2-oxoacid:ferredoxin oxidoreductase subunit beta.